Reading from the N-terminus, the 542-residue chain is CTP synthase (542 aa).

Positions 1–266 (MATNYIFVTG…DDFICQRFHL (266 aa)) are amidoligase domain. A CTP-binding site is contributed by Ser-14. UTP is bound at residue Ser-14. ATP-binding positions include 15–20 (SLGKGI) and Asp-72. The Mg(2+) site is built by Asp-72 and Glu-140. Residues 147 to 149 (DIE), 187 to 192 (KTKPTQ), and Lys-223 contribute to the CTP site. UTP is bound by residues 187–192 (KTKPTQ) and Lys-223. Position 239 to 241 (239 to 241 (KDV)) interacts with ATP. In terms of domain architecture, Glutamine amidotransferase type-1 spans 291-542 (VIGMVGKYTE…VKAAKDNQKK (252 aa)). Residue Gly-352 participates in L-glutamine binding. Residue Cys-379 is the Nucleophile; for glutamine hydrolysis of the active site. Residues 380–383 (LGMQ), Glu-403, and Arg-470 each bind L-glutamine. Active-site residues include His-515 and Glu-517.

It belongs to the CTP synthase family. In terms of assembly, homotetramer.

The catalysed reaction is UTP + L-glutamine + ATP + H2O = CTP + L-glutamate + ADP + phosphate + 2 H(+). It carries out the reaction L-glutamine + H2O = L-glutamate + NH4(+). It catalyses the reaction UTP + NH4(+) + ATP = CTP + ADP + phosphate + 2 H(+). The protein operates within pyrimidine metabolism; CTP biosynthesis via de novo pathway; CTP from UDP: step 2/2. Allosterically activated by GTP, when glutamine is the substrate; GTP has no effect on the reaction when ammonia is the substrate. The allosteric effector GTP functions by stabilizing the protein conformation that binds the tetrahedral intermediate(s) formed during glutamine hydrolysis. Inhibited by the product CTP, via allosteric rather than competitive inhibition. Functionally, catalyzes the ATP-dependent amination of UTP to CTP with either L-glutamine or ammonia as the source of nitrogen. Regulates intracellular CTP levels through interactions with the four ribonucleotide triphosphates. This is CTP synthase from Pasteurella multocida (strain Pm70).